The following is a 182-amino-acid chain: NADH-quinone oxidoreductase subunit B 2 (182 aa).

[4Fe-4S] cluster-binding residues include Cys-57, Cys-58, Cys-123, and Cys-153.

Belongs to the complex I 20 kDa subunit family. As to quaternary structure, NDH-1 is composed of 14 different subunits. Subunits NuoB, C, D, E, F, and G constitute the peripheral sector of the complex. [4Fe-4S] cluster is required as a cofactor.

It localises to the cell membrane. It catalyses the reaction a quinone + NADH + 5 H(+)(in) = a quinol + NAD(+) + 4 H(+)(out). Its function is as follows. NDH-1 shuttles electrons from NADH, via FMN and iron-sulfur (Fe-S) centers, to quinones in the respiratory chain. The immediate electron acceptor for the enzyme in this species is believed to be a menaquinone. Couples the redox reaction to proton translocation (for every two electrons transferred, four hydrogen ions are translocated across the cytoplasmic membrane), and thus conserves the redox energy in a proton gradient. The polypeptide is NADH-quinone oxidoreductase subunit B 2 (Symbiobacterium thermophilum (strain DSM 24528 / JCM 14929 / IAM 14863 / T)).